Here is a 436-residue protein sequence, read N- to C-terminus: T-box transcription factor T (436 aa).

A DNA-binding region (T-box) is located at residues 51–219 (LWLRFKELTN…YNPFAKAFLD (169 aa)).

Monomer. Binds DNA as a monomer.

Its subcellular location is the nucleus. Its function is as follows. Involved in the transcriptional regulation of genes required for mesoderm formation and differentiation. Binds to a palindromic T site 5'-TTCACACCTAGGTGTGAA-3' DNA sequence and activates gene transcription when bound to such a site. This chain is T-box transcription factor T, found in Mus musculus (Mouse).